We begin with the raw amino-acid sequence, 754 residues long: Putative sulfate transporter YPR003C (754 aa).

The disordered stretch occupies residues 1 to 91 (MTSNNSLLGR…NTSNTNNNDS (91 aa)). The Cytoplasmic portion of the chain corresponds to 1 to 118 (MTSNNSLLGR…SWLPEYTFNK (118 aa)). The segment covering 25–45 (RSVDQRDTFSDNFDYDKDSSN) has biased composition (basic and acidic residues). Residues 65-89 (NSRSGCTNNTNNTNNTSNTSNTNNN) are compositionally biased toward low complexity. A helical transmembrane segment spans residues 119-139 (LWGDVIAGISVASFQIPLALS). Residues 140–146 (YTTSIAH) are Lumenal-facing. Residues 147–167 (VPPLCGLYSLAISPFVYGILG) traverse the membrane as a helical segment. At 168-172 (SVPQM) the chain is on the cytoplasmic side. A helical membrane pass occupies residues 173-193 (IVGPESAISLVVGQAVESITL). The Lumenal portion of the chain corresponds to 194–199 (HKENVS). Residues 200–220 (LIDISTVITFVSGTILLFSGI) form a helical membrane-spanning segment. Residues 221–232 (SRFGFLGNVLSK) are Cytoplasmic-facing. A helical membrane pass occupies residues 233-253 (ALLRGFISSVGLVMIINSLIS). Topologically, residues 254–282 (ELKLDKFLVSLPQHYHTPFEKILFLIDYA) are lumenal. A helical transmembrane segment spans residues 283–303 (PAQYHIPTAIFSGCCLIVLFL). Topologically, residues 304-317 (TRLLKRKLMKYHKS) are cytoplasmic. Residues 318-338 (AIFFPDILLVVIVTILISMKF) form a helical membrane-spanning segment. Residues 339-370 (NLKHRYGISIIGDFSMDNFDELKNPLTRPRRK) lie on the Lumenal side of the membrane. Residues 371–391 (LIPDLFSASLIVAMLGFFEST) traverse the membrane as a helical segment. Residues 392–410 (TASKSLGTTYNLTVSSNRE) lie on the Cytoplasmic side of the membrane. Residues 411 to 431 (LVALGFMNIVISLFGALPAFG) traverse the membrane as a helical segment. Residues 432 to 450 (GYGRSKINALSGAQSVMSG) are Lumenal-facing. The chain crosses the membrane as a helical span at residues 451-471 (VFMGVITLITMNLLLQFVHYI). The Cytoplasmic segment spans residues 472 to 474 (PNC). A helical transmembrane segment spans residues 475–495 (VLSVITTIIGISLLEEVPGDI). Over 496-517 (KFHLRCGGFSELFVFAVTFCTT) the chain is Lumenal. A helical membrane pass occupies residues 518–538 (IFYSIEAGICIGCVYSIINII). Residues 539–754 (KHSAKSRIQI…SNTLFNSSLV (216 aa)) lie on the Cytoplasmic side of the membrane. The STAS domain maps to 574-725 (DVEGTEEIEG…DSIDAALYEI (152 aa)).

It belongs to the SLC26A/SulP transporter (TC 2.A.53) family.

Its subcellular location is the endoplasmic reticulum membrane. In terms of biological role, possible sulfate transporter. In Saccharomyces cerevisiae (strain ATCC 204508 / S288c) (Baker's yeast), this protein is Putative sulfate transporter YPR003C.